A 108-amino-acid polypeptide reads, in one-letter code: Ig kappa chain V-V region NQ5-89.4 (108 aa).

The interval 1-23 (DIQMTQTTSSLSASLGHRVTITC) is framework-1. Residues cysteine 23 and cysteine 88 are joined by a disulfide bond. A complementarity-determining-1 region spans residues 24-34 (SASQDISNYLN). A framework-2 region spans residues 35-49 (WYQQKPDGTVKLLIY). A complementarity-determining-2 region spans residues 50–56 (YTSRLHS). The interval 57 to 88 (GVPSRFSGSGSATDYSLTITNLQQEDXATYXC) is framework-3. A complementarity-determining-3 region spans residues 89–97 (QQGNTLPYT). Positions 98-107 (FGGGTKLXIK) are framework-4.

In terms of biological role, anti-2-phenyl oxazolone (PHOX) Antibody. This is Ig kappa chain V-V region NQ5-89.4 from Mus musculus (Mouse).